A 260-amino-acid chain; its full sequence is HLA class II histocompatibility antigen, DP alpha 1 chain (260 aa).

A signal peptide spans 1–28 (MRPEDRMFHIRAVILRALSLAFLLSLRG). Residues 29–115 (AGAIKADHVS…QRSNHTQATN (87 aa)) form an alpha-1 region. The Extracellular segment spans residues 29 to 222 (AGAIKADHVS…EPIQMPETTE (194 aa)). Residues asparagine 109 and asparagine 149 are each glycosylated (N-linked (GlcNAc...) asparagine). The segment at 116–209 (DPPEVTVFPK…GLDQPLLKHW (94 aa)) is alpha-2. The Ig-like C1-type domain maps to 118-210 (PEVTVFPKEP…LDQPLLKHWE (93 aa)). Residues cysteine 138 and cysteine 194 are joined by a disulfide bond. The tract at residues 210-222 (EAQEPIQMPETTE) is connecting peptide. A helical transmembrane segment spans residues 223-245 (TVLCALGLVLGLVGIIVGTVLII). At 246–260 (KSLRSGHDPRAQGTL) the chain is on the cytoplasmic side.

It belongs to the MHC class II family. As to quaternary structure, heterodimer of an alpha and a beta subunit; also referred as MHC class II molecule. In the endoplasmic reticulum (ER) it forms a heterononamer; 3 MHC class II molecules bind to a CD74 homotrimer (also known as invariant chain or HLA class II histocompatibility antigen gamma chain). In the endosomal/lysosomal system; CD74 undergoes sequential degradation by various proteases; leaving a small fragment termed CLIP on each MHC class II molecule. MHC class II molecule interacts with HLA_DM, and HLA_DO in B-cells, in order to release CLIP and facilitate the binding of antigenic peptides.

The protein localises to the cell membrane. The protein resides in the endoplasmic reticulum membrane. It localises to the golgi apparatus. Its subcellular location is the trans-Golgi network membrane. It is found in the endosome membrane. The protein localises to the lysosome membrane. Functionally, binds peptides derived from antigens that access the endocytic route of antigen presenting cells (APC) and presents them on the cell surface for recognition by the CD4 T-cells. The peptide binding cleft accommodates peptides of 10-30 residues. The peptides presented by MHC class II molecules are generated mostly by degradation of proteins that access the endocytic route, where they are processed by lysosomal proteases and other hydrolases. Exogenous antigens that have been endocytosed by the APC are thus readily available for presentation via MHC II molecules, and for this reason this antigen presentation pathway is usually referred to as exogenous. As membrane proteins on their way to degradation in lysosomes as part of their normal turn-over are also contained in the endosomal/lysosomal compartments, exogenous antigens must compete with those derived from endogenous components. Autophagy is also a source of endogenous peptides, autophagosomes constitutively fuse with MHC class II loading compartments. In addition to APCs, other cells of the gastrointestinal tract, such as epithelial cells, express MHC class II molecules and CD74 and act as APCs, which is an unusual trait of the GI tract. To produce a MHC class II molecule that presents an antigen, three MHC class II molecules (heterodimers of an alpha and a beta chain) associate with a CD74 trimer in the ER to form a heterononamer. Soon after the entry of this complex into the endosomal/lysosomal system where antigen processing occurs, CD74 undergoes a sequential degradation by various proteases, including CTSS and CTSL, leaving a small fragment termed CLIP (class-II-associated invariant chain peptide). The removal of CLIP is facilitated by HLA-DM via direct binding to the alpha-beta-CLIP complex so that CLIP is released. HLA-DM stabilizes MHC class II molecules until primary high affinity antigenic peptides are bound. The MHC II molecule bound to a peptide is then transported to the cell membrane surface. In B-cells, the interaction between HLA-DM and MHC class II molecules is regulated by HLA-DO. Primary dendritic cells (DCs) also to express HLA-DO. Lysosomal microenvironment has been implicated in the regulation of antigen loading into MHC II molecules, increased acidification produces increased proteolysis and efficient peptide loading. The sequence is that of HLA class II histocompatibility antigen, DP alpha 1 chain (HLA-DPA1) from Homo sapiens (Human).